Here is a 110-residue protein sequence, read N- to C-terminus: Large ribosomal subunit protein uL22 (110 aa).

The protein belongs to the universal ribosomal protein uL22 family. As to quaternary structure, part of the 50S ribosomal subunit.

Functionally, this protein binds specifically to 23S rRNA; its binding is stimulated by other ribosomal proteins, e.g. L4, L17, and L20. It is important during the early stages of 50S assembly. It makes multiple contacts with different domains of the 23S rRNA in the assembled 50S subunit and ribosome. Its function is as follows. The globular domain of the protein is located near the polypeptide exit tunnel on the outside of the subunit, while an extended beta-hairpin is found that lines the wall of the exit tunnel in the center of the 70S ribosome. This is Large ribosomal subunit protein uL22 from Halorhodospira halophila (strain DSM 244 / SL1) (Ectothiorhodospira halophila (strain DSM 244 / SL1)).